We begin with the raw amino-acid sequence, 604 residues long: NRPS-independent siderophore synthetase-like protein ankE (604 aa).

The enzyme catalyses cyclo(L-arginyl-(Z)-dehydro-4-O-homoseryl-tyrosyl) + citrate + ATP = NK13650 B + AMP + diphosphate + H(+). It participates in secondary metabolite biosynthesis. Its function is as follows. NRPS-independent siderophore synthetase-like protein; part of the ank cluster that mediates the biosynthesis of NK13650 C, a highly modified cyclo-arginine-tyrosine dipeptide. AnkE is responsible of the production of NK13650 B via ligation of citrate to the ankD product. Within the pathway, the cyclodipeptide synthase ankA acts as the scaffold-generating enzyme and is responsible for formation of the cyclo-Arg-Tyr diketopiperazine (cRY) from L-Arg and L-Tyr. The ankA product cRY is desaturated by the cytochrome P450 monooxygenase ankB to yield a dehydro-cyclodipeptide intermediate. The FAD-dependent monooxygenase ankC then installs the m-OH, ankD catalyzes the attachment of L-homoserine, and ankE ligates citrate to the ankD product to yield NK13650 B. The O-methyltransferase ankF is responsible for methylation of the C-17 phenol group of NK13650 B to produce NK13650 D. Amidation of NK13650 D with L-Asp by ankG then leads to the production of NK13650 C, whereas amidation of NK13650 B produces NK13650 A. This is NRPS-independent siderophore synthetase-like protein ankE from Aspergillus thermomutatus (Neosartorya pseudofischeri).